We begin with the raw amino-acid sequence, 907 residues long: Eukaryotic translation initiation factor 4 gamma 2 (907 aa).

M1 carries the N-acetylmethionine modification. The disordered stretch occupies residues 1–71 (MESAIAEGGA…SAANNSANEK (71 aa)). S11 carries the phosphoserine modification. Residues 78 to 308 (FRKVRGILNK…QDTVELREHH (231 aa)) enclose the MIF4G domain. T89 carries the phosphothreonine modification. The residue at position 360 (R360) is an Omega-N-methylarginine. S395 is modified (phosphoserine). The residue at position 431 (K431) is an N6-methyllysine. S443 carries the post-translational modification Phosphoserine. Positions 498–541 (PPSAQPPRTQTPPLGQTPQLGLKTNPPLIQEKPAKTSKKPPPSK) are disordered. Residues 503–516 (PPRTQTPPLGQTPQ) show a composition bias toward polar residues. An Omega-N-methylarginine modification is found at R505. Phosphothreonine is present on residues T508 and T514. Residues 543–666 (ELLKLTETVV…SISELAQPLE (124 aa)) enclose the MI domain. K575 participates in a covalent cross-link: Glycyl lysine isopeptide (Lys-Gly) (interchain with G-Cter in SUMO2). The 185-residue stretch at 720 to 904 (EGKGLSFLFP…ETAEEEESEE (185 aa)) folds into the W2 domain. S902 is subject to Phosphoserine.

The protein belongs to the eukaryotic initiation factor 4G family. As to quaternary structure, interacts with the serine/threonine protein kinases MKNK1 and MKNK2. Binds EIF4A and EIF3. Interacts with MIF4GD. Interacts with DAZAP2. Phosphorylation; hyperphosphorylated during mitosis.

Functionally, appears to play a role in the switch from cap-dependent to IRES-mediated translation during mitosis, apoptosis and viral infection. Cleaved by some caspases and viral proteases. This chain is Eukaryotic translation initiation factor 4 gamma 2 (EIF4G2), found in Bos taurus (Bovine).